Here is a 357-residue protein sequence, read N- to C-terminus: Peptide chain release factor 1 (357 aa).

Gln-232 is modified (N5-methylglutamine).

Belongs to the prokaryotic/mitochondrial release factor family. In terms of processing, methylated by PrmC. Methylation increases the termination efficiency of RF1.

The protein localises to the cytoplasm. Peptide chain release factor 1 directs the termination of translation in response to the peptide chain termination codons UAG and UAA. The chain is Peptide chain release factor 1 from Oleidesulfovibrio alaskensis (strain ATCC BAA-1058 / DSM 17464 / G20) (Desulfovibrio alaskensis).